The following is a 66-amino-acid chain: Large ribosomal subunit protein bL31 (66 aa).

The Zn(2+) site is built by Cys-16, Cys-18, Cys-36, and Cys-39.

It belongs to the bacterial ribosomal protein bL31 family. Type A subfamily. As to quaternary structure, part of the 50S ribosomal subunit. Requires Zn(2+) as cofactor.

Its function is as follows. Binds the 23S rRNA. The protein is Large ribosomal subunit protein bL31 of Leptospira biflexa serovar Patoc (strain Patoc 1 / Ames).